The sequence spans 155 residues: Egg-lysin (155 aa).

A signal peptide spans 1 to 18; sequence MKLLVLCLFAMMATLAVS.

As to quaternary structure, monomer. Homodimer. Molecules associate into dimers and then rapidly dissociate again. Interacts (as a monomer) with the egg vitelline layer protein VERL (via VERL repeats); each VERL chain can bind multiple copies of lysin. As to expression, sperm (at protein level).

It localises to the cytoplasmic vesicle. The protein localises to the secretory vesicle. Its subcellular location is the acrosome lumen. Functionally, creates a 3 um hole in the egg vitelline layer through which the sperm passes. Does not have enzyme activity. Species-specific interaction between the sperm protein lysin and the egg protein VERL exposes a basic surface on lysin that may dissociate the egg vitelline layer via electrostatic repulsion. Plays a role in ensuring species-specific fertilization. The sequence is that of Egg-lysin from Haliotis corrugata (Pink abalone).